The primary structure comprises 177 residues: Shikimate kinase (177 aa).

Residue glycine 14–threonine 19 participates in ATP binding. Serine 18 lines the Mg(2+) pocket. The substrate site is built by aspartate 36, arginine 60, and glycine 82. ATP is bound at residue arginine 120. Arginine 139 contacts substrate.

It belongs to the shikimate kinase family. In terms of assembly, monomer. It depends on Mg(2+) as a cofactor.

The protein resides in the cytoplasm. It catalyses the reaction shikimate + ATP = 3-phosphoshikimate + ADP + H(+). It functions in the pathway metabolic intermediate biosynthesis; chorismate biosynthesis; chorismate from D-erythrose 4-phosphate and phosphoenolpyruvate: step 5/7. In terms of biological role, catalyzes the specific phosphorylation of the 3-hydroxyl group of shikimic acid using ATP as a cosubstrate. The protein is Shikimate kinase of Gloeobacter violaceus (strain ATCC 29082 / PCC 7421).